Here is a 245-residue protein sequence, read N- to C-terminus: Ribonuclease PH (245 aa).

Phosphate contacts are provided by residues Arg93 and 131–133 (GTR).

It belongs to the RNase PH family. Homohexameric ring arranged as a trimer of dimers.

The enzyme catalyses tRNA(n+1) + phosphate = tRNA(n) + a ribonucleoside 5'-diphosphate. Functionally, phosphorolytic 3'-5' exoribonuclease that plays an important role in tRNA 3'-end maturation. Removes nucleotide residues following the 3'-CCA terminus of tRNAs; can also add nucleotides to the ends of RNA molecules by using nucleoside diphosphates as substrates, but this may not be physiologically important. Probably plays a role in initiation of 16S rRNA degradation (leading to ribosome degradation) during starvation. This Corynebacterium glutamicum (strain ATCC 13032 / DSM 20300 / JCM 1318 / BCRC 11384 / CCUG 27702 / LMG 3730 / NBRC 12168 / NCIMB 10025 / NRRL B-2784 / 534) protein is Ribonuclease PH.